We begin with the raw amino-acid sequence, 206 residues long: Putative archaetidylserine decarboxylase proenzyme (206 aa).

Serine 172 serves as the catalytic Schiff-base intermediate with substrate; via pyruvic acid. Serine 172 carries the post-translational modification Pyruvic acid (Ser); by autocatalysis.

Belongs to the phosphatidylserine decarboxylase family. PSD-A subfamily. As to quaternary structure, heterodimer of a large membrane-associated beta subunit and a small pyruvoyl-containing alpha subunit. Pyruvate serves as cofactor. Is synthesized initially as an inactive proenzyme. Formation of the active enzyme involves a self-maturation process in which the active site pyruvoyl group is generated from an internal serine residue via an autocatalytic post-translational modification. Two non-identical subunits are generated from the proenzyme in this reaction, and the pyruvate is formed at the N-terminus of the alpha chain, which is derived from the carboxyl end of the proenzyme. The post-translation cleavage follows an unusual pathway, termed non-hydrolytic serinolysis, in which the side chain hydroxyl group of the serine supplies its oxygen atom to form the C-terminus of the beta chain, while the remainder of the serine residue undergoes an oxidative deamination to produce ammonia and the pyruvoyl prosthetic group on the alpha chain.

It localises to the cell membrane. It carries out the reaction archaetidylserine + H(+) = archaetidylethanolamine + CO2. Catalyzes the formation of archaetidylethanolamine (PtdEtn) from archaetidylserine (PtdSer). This chain is Putative archaetidylserine decarboxylase proenzyme, found in Methanocaldococcus jannaschii (strain ATCC 43067 / DSM 2661 / JAL-1 / JCM 10045 / NBRC 100440) (Methanococcus jannaschii).